The sequence spans 150 residues: UPF0756 membrane protein plu2726 (150 aa).

Helical transmembrane passes span 8-28 (LLVLLVLAALGIISHNMTVTL), 51-71 (YGLTIGVLILTVGVMAPIASG), 88-108 (LLAIVIGVLVSWLGSRGVSLM), and 123-143 (VLGVALFKGVPVGPLIAAGIL).

It belongs to the UPF0756 family.

It localises to the cell membrane. The sequence is that of UPF0756 membrane protein plu2726 from Photorhabdus laumondii subsp. laumondii (strain DSM 15139 / CIP 105565 / TT01) (Photorhabdus luminescens subsp. laumondii).